Here is a 484-residue protein sequence, read N- to C-terminus: Transcription factor TGAL4 (484 aa).

Residues 1–11 show a composition bias toward polar residues; that stretch reads MGEASSSSGHP. Disordered stretches follow at residues 1-22, 84-137, and 155-181; these read MGEA…GYGF, ATAA…NASS, and QQEQ…DPKT. Residues 123-137 are compositionally biased toward low complexity; it reads SESSSKNNSNQNASS. Residues 163 to 173 are compositionally biased toward polar residues; it reads ATNSPTHSSKT. Residues 178 to 222 enclose the bZIP domain; sequence DPKTMRRLAQNREAARKSRLRKKAYIQQLESSKLKLAQMEQDIHR. Residues 180–200 form a basic motif region; the sequence is KTMRRLAQNREAARKSRLRKK. Positions 206 to 220 are leucine-zipper; the sequence is LESSKLKLAQMEQDI. Residues 241–455 form the DOG1 domain; the sequence is AAMFDVDYAR…RALSSLWASR (215 aa).

Belongs to the bZIP family. Interacts with NPR1/NH1 and NPR3/NH3.

Its subcellular location is the nucleus. Transcriptional regulator involved in defense response. The polypeptide is Transcription factor TGAL4 (Oryza sativa subsp. japonica (Rice)).